The following is a 601-amino-acid chain: Elongation factor 4 (601 aa).

Residues 6 to 188 (SHIRNFSIIA…QIVHRVPAPE (183 aa)) form the tr-type G domain. Residues 18 to 23 (DHGKST) and 135 to 138 (NKID) each bind GTP.

The protein belongs to the TRAFAC class translation factor GTPase superfamily. Classic translation factor GTPase family. LepA subfamily.

It is found in the cell inner membrane. The catalysed reaction is GTP + H2O = GDP + phosphate + H(+). In terms of biological role, required for accurate and efficient protein synthesis under certain stress conditions. May act as a fidelity factor of the translation reaction, by catalyzing a one-codon backward translocation of tRNAs on improperly translocated ribosomes. Back-translocation proceeds from a post-translocation (POST) complex to a pre-translocation (PRE) complex, thus giving elongation factor G a second chance to translocate the tRNAs correctly. Binds to ribosomes in a GTP-dependent manner. The chain is Elongation factor 4 from Anaeromyxobacter sp. (strain K).